Reading from the N-terminus, the 398-residue chain is Argininosuccinate lyase (398 aa).

It belongs to the lyase 1 family. Argininosuccinate lyase subfamily.

Its subcellular location is the cytoplasm. It carries out the reaction 2-(N(omega)-L-arginino)succinate = fumarate + L-arginine. It functions in the pathway amino-acid biosynthesis; L-arginine biosynthesis; L-arginine from L-ornithine and carbamoyl phosphate: step 3/3. This chain is Argininosuccinate lyase, found in Thermotoga neapolitana (strain ATCC 49049 / DSM 4359 / NBRC 107923 / NS-E).